The primary structure comprises 223 residues: Deoxyribose-phosphate aldolase (223 aa).

The active-site Proton donor/acceptor is the Asp89. Residue Lys152 is the Schiff-base intermediate with acetaldehyde of the active site. The active-site Proton donor/acceptor is the Lys181.

It belongs to the DeoC/FbaB aldolase family. DeoC type 1 subfamily.

It is found in the cytoplasm. The catalysed reaction is 2-deoxy-D-ribose 5-phosphate = D-glyceraldehyde 3-phosphate + acetaldehyde. The protein operates within carbohydrate degradation; 2-deoxy-D-ribose 1-phosphate degradation; D-glyceraldehyde 3-phosphate and acetaldehyde from 2-deoxy-alpha-D-ribose 1-phosphate: step 2/2. In terms of biological role, catalyzes a reversible aldol reaction between acetaldehyde and D-glyceraldehyde 3-phosphate to generate 2-deoxy-D-ribose 5-phosphate. In Bacillus cereus (strain G9842), this protein is Deoxyribose-phosphate aldolase.